The following is a 448-amino-acid chain: ATP-dependent protease ATPase subunit HslU (448 aa).

ATP-binding positions include V21, 63 to 68, D261, E326, and R398; that span reads GVGKTE.

It belongs to the ClpX chaperone family. HslU subfamily. In terms of assembly, a double ring-shaped homohexamer of HslV is capped on each side by a ring-shaped HslU homohexamer. The assembly of the HslU/HslV complex is dependent on binding of ATP.

The protein resides in the cytoplasm. Its function is as follows. ATPase subunit of a proteasome-like degradation complex; this subunit has chaperone activity. The binding of ATP and its subsequent hydrolysis by HslU are essential for unfolding of protein substrates subsequently hydrolyzed by HslV. HslU recognizes the N-terminal part of its protein substrates and unfolds these before they are guided to HslV for hydrolysis. The sequence is that of ATP-dependent protease ATPase subunit HslU from Persephonella marina (strain DSM 14350 / EX-H1).